A 446-amino-acid polypeptide reads, in one-letter code: MHIIAVGLNFRTAPVEIREKLSFNEQELASAMKTLSGQKSILENIIVSTCNRTEIYAVVDQLHTGRYYVKAFLAEWFGIDKEEFSPYLTIYENDGAIEHLYRVACGLDSMVIGETQILGQVRSSFLLAQEEETIGTVFNQLFKQAVTLAKKAHHETEIGANAVSVSYAAVELAKKIFGDLSSKHVLILGAGKMGQLAVQNLYGSGAKKVTVVNRTFEKAQELANRFSGEAKPFADLQHALSEADILISSTGANDYVVTKQMMSEAERTRKGRPLFMVDIAVPRDLDPELDELETVFLYDIDDLNGIVESNLQERQKAADEIEIMLEAEIVAFKSWLGTLGVVPVISALRQKALTIQAETMKSIDRKLPDLSERERKVLNKHTKSIINQLLRDPIPHAKELAGEKHAEESLELFMKIFNIEQEVALQKEKEEQLHTSITSHSVAYQS.

Substrate is bound by residues 49–52, serine 109, 114–116, and glutamine 120; these read TCNR and ETQ. Cysteine 50 acts as the Nucleophile in catalysis. An NADP(+)-binding site is contributed by 189 to 194; the sequence is GAGKMG.

Belongs to the glutamyl-tRNA reductase family. Homodimer.

It carries out the reaction (S)-4-amino-5-oxopentanoate + tRNA(Glu) + NADP(+) = L-glutamyl-tRNA(Glu) + NADPH + H(+). The protein operates within porphyrin-containing compound metabolism; protoporphyrin-IX biosynthesis; 5-aminolevulinate from L-glutamyl-tRNA(Glu): step 1/2. Functionally, catalyzes the NADPH-dependent reduction of glutamyl-tRNA(Glu) to glutamate 1-semialdehyde (GSA). The sequence is that of Glutamyl-tRNA reductase from Priestia megaterium (Bacillus megaterium).